Consider the following 271-residue polypeptide: Tryptophan synthase alpha chain (271 aa).

Residues Glu49 and Asp60 each act as proton acceptor in the active site.

It belongs to the TrpA family. As to quaternary structure, tetramer of two alpha and two beta chains.

It catalyses the reaction (1S,2R)-1-C-(indol-3-yl)glycerol 3-phosphate + L-serine = D-glyceraldehyde 3-phosphate + L-tryptophan + H2O. The protein operates within amino-acid biosynthesis; L-tryptophan biosynthesis; L-tryptophan from chorismate: step 5/5. Its function is as follows. The alpha subunit is responsible for the aldol cleavage of indoleglycerol phosphate to indole and glyceraldehyde 3-phosphate. The sequence is that of Tryptophan synthase alpha chain from Burkholderia pseudomallei (strain 1106a).